We begin with the raw amino-acid sequence, 223 residues long: Deoxyribose-phosphate aldolase (223 aa).

D89 functions as the Proton donor/acceptor in the catalytic mechanism. K152 acts as the Schiff-base intermediate with acetaldehyde in catalysis. K181 acts as the Proton donor/acceptor in catalysis.

Belongs to the DeoC/FbaB aldolase family. DeoC type 1 subfamily.

The protein resides in the cytoplasm. It carries out the reaction 2-deoxy-D-ribose 5-phosphate = D-glyceraldehyde 3-phosphate + acetaldehyde. Its pathway is carbohydrate degradation; 2-deoxy-D-ribose 1-phosphate degradation; D-glyceraldehyde 3-phosphate and acetaldehyde from 2-deoxy-alpha-D-ribose 1-phosphate: step 2/2. In terms of biological role, catalyzes a reversible aldol reaction between acetaldehyde and D-glyceraldehyde 3-phosphate to generate 2-deoxy-D-ribose 5-phosphate. In Listeria monocytogenes serotype 4a (strain HCC23), this protein is Deoxyribose-phosphate aldolase.